The chain runs to 741 residues: uncharacterized protein (741 aa).

The next 5 helical transmembrane spans lie at 34–54 (WLLWVTAGLVLFLLALVLLII), 76–96 (LIIPFIALFATIITFQVFING), 120–140 (LAVLFIWITGTAFLSGLFVSL), 156–176 (LSVFFGVLLLSLLFSCVLIII), and 187–207 (LLLLLGVSLASFTTVILAFSI). Basic and acidic residues predominate over residues 404–423 (EAEEKERQEKEEKEKAEKDN). Disordered stretches follow at residues 404-473 (EAEE…FRPR) and 555-647 (QKEL…ENAK). Residues 424–439 (GNGQDSNKVNSVSTEP) show a composition bias toward polar residues. 2 stretches are compositionally biased toward basic and acidic residues: residues 445–465 (SDADSKDNNDSSDSQGKDSSK) and 555–573 (QKELTEKNKQKQDGKDQKS). Residues 623–643 (DNTDESEDKQSEEEEKFDEEI) show a composition bias toward acidic residues. The next 2 helical transmembrane spans lie at 655–675 (AFFNTASIWLSSPFLFFENGA) and 715–735 (VIIAMVLVVTLGLLVGSFFAY).

It to M.pneumoniae MPN_333.

The protein localises to the cell membrane. This is an uncharacterized protein from Mycoplasma pneumoniae (strain ATCC 29342 / M129 / Subtype 1) (Mycoplasmoides pneumoniae).